Reading from the N-terminus, the 175-residue chain is Large ribosomal subunit protein uL10 (175 aa).

This sequence belongs to the universal ribosomal protein uL10 family. As to quaternary structure, part of the ribosomal stalk of the 50S ribosomal subunit. The N-terminus interacts with L11 and the large rRNA to form the base of the stalk. The C-terminus forms an elongated spine to which L12 dimers bind in a sequential fashion forming a multimeric L10(L12)X complex.

In terms of biological role, forms part of the ribosomal stalk, playing a central role in the interaction of the ribosome with GTP-bound translation factors. In Prochlorococcus marinus (strain MIT 9211), this protein is Large ribosomal subunit protein uL10.